A 634-amino-acid chain; its full sequence is RNA polymerase sigma factor RpoD (634 aa).

The disordered stretch occupies residues 177–202; sequence LHDETPENDEENSSETEGEEHEDNHL. Positions 182–197 are enriched in acidic residues; sequence PENDEENSSETEGEEH. A sigma-70 factor domain-2 region spans residues 385–455; that stretch reads MIEANLRLVI…TRAIADQART (71 aa). The Interaction with polymerase core subunit RpoC signature appears at 409–412; the sequence is DLIQ. The sigma-70 factor domain-3 stretch occupies residues 464-541; the sequence is ETINKILRTS…DKNAVAPIDA (78 aa). The tract at residues 554 to 607 is sigma-70 factor domain-4; that stretch reads VLATLTPREERVLRMRFGIGMNTDHTLEEVGQQFKVTRERIRQIESKALRKLQH. The H-T-H motif DNA-binding region spans 580-599; that stretch reads LEEVGQQFKVTRERIRQIES. The disordered stretch occupies residues 608–634; that stretch reads PIRSKKLNSFRSGGKRGDGNSSDLLEA.

This sequence belongs to the sigma-70 factor family. RpoD/SigA subfamily. Interacts transiently with the RNA polymerase catalytic core.

It is found in the cytoplasm. Its function is as follows. Sigma factors are initiation factors that promote the attachment of RNA polymerase to specific initiation sites and are then released. This sigma factor is the primary sigma factor during exponential growth. The protein is RNA polymerase sigma factor RpoD of Rickettsia conorii (strain ATCC VR-613 / Malish 7).